Here is a 183-residue protein sequence, read N- to C-terminus: GTP cyclohydrolase 1 (183 aa).

Zn(2+) contacts are provided by C71, H74, and C142.

This sequence belongs to the GTP cyclohydrolase I family. Toroid-shaped homodecamer, composed of two pentamers of five dimers.

The enzyme catalyses GTP + H2O = 7,8-dihydroneopterin 3'-triphosphate + formate + H(+). It participates in cofactor biosynthesis; 7,8-dihydroneopterin triphosphate biosynthesis; 7,8-dihydroneopterin triphosphate from GTP: step 1/1. The protein is GTP cyclohydrolase 1 of Leptospira interrogans serogroup Icterohaemorrhagiae serovar copenhageni (strain Fiocruz L1-130).